Here is a 215-residue protein sequence, read N- to C-terminus: Large ribosomal subunit protein uL16m (215 aa).

A mitochondrion-targeting transit peptide spans 1–36 (MALQQYNKFPFFFSGILGPTRLNGLQMPPIQTMVRW).

This sequence belongs to the universal ribosomal protein uL16 family. Component of the mitochondrial large ribosomal subunit (mt-LSU). Mature yeast 74S mitochondrial ribosomes consist of a small (37S) and a large (54S) subunit. The 37S small subunit contains a 15S ribosomal RNA (15S mt-rRNA) and at least 32 different proteins. The 54S large subunit contains a 21S rRNA (21S mt-rRNA) and at least 45 different proteins.

The protein resides in the mitochondrion. Its function is as follows. Component of the mitochondrial ribosome (mitoribosome), a dedicated translation machinery responsible for the synthesis of mitochondrial genome-encoded proteins, including at least some of the essential transmembrane subunits of the mitochondrial respiratory chain. The mitoribosomes are attached to the mitochondrial inner membrane and translation products are cotranslationally integrated into the membrane. The polypeptide is Large ribosomal subunit protein uL16m (mrpl16) (Schizosaccharomyces pombe (strain 972 / ATCC 24843) (Fission yeast)).